A 272-amino-acid chain; its full sequence is MTVLDDINAGAREDMEARRRLVSLAELKDRAAAAAPARDAWAALGGDDSTRKQLKVIAEIKRRSPSKGDLASIADPAELAVQYADGGASVISVLTEQRRFSGSLADFDAVRKAVDVPLLRKDFTVDEYQIWEARAHGADLILLIVASLTDAELRDFSQLTRELGMNALVETHTAEEIERAVAADARIIGVNVRNLKTLDVDRSVFASLSGGIPPEAVIVAESGVRGVDDVRHYAASGANAVLVGEALVSDATPRERIAEFTAAGAEAIAARV.

Belongs to the TrpC family.

The enzyme catalyses 1-(2-carboxyphenylamino)-1-deoxy-D-ribulose 5-phosphate + H(+) = (1S,2R)-1-C-(indol-3-yl)glycerol 3-phosphate + CO2 + H2O. It participates in amino-acid biosynthesis; L-tryptophan biosynthesis; L-tryptophan from chorismate: step 4/5. This chain is Indole-3-glycerol phosphate synthase, found in Arthrobacter sp. (strain FB24).